The chain runs to 160 residues: Phosphopantetheine adenylyltransferase (160 aa).

Threonine 10 lines the substrate pocket. Residues 10-11 (TF) and histidine 18 contribute to the ATP site. Substrate-binding residues include lysine 42, leucine 74, and arginine 88. ATP is bound by residues 89-91 (GLR), glutamate 99, and 124-130 (NSFISST).

It belongs to the bacterial CoaD family. As to quaternary structure, homohexamer. The cofactor is Mg(2+).

The protein resides in the cytoplasm. It catalyses the reaction (R)-4'-phosphopantetheine + ATP + H(+) = 3'-dephospho-CoA + diphosphate. The protein operates within cofactor biosynthesis; coenzyme A biosynthesis; CoA from (R)-pantothenate: step 4/5. In terms of biological role, reversibly transfers an adenylyl group from ATP to 4'-phosphopantetheine, yielding dephospho-CoA (dPCoA) and pyrophosphate. In Pseudoalteromonas atlantica (strain T6c / ATCC BAA-1087), this protein is Phosphopantetheine adenylyltransferase.